Consider the following 500-residue polypeptide: Probable cytosol aminopeptidase (500 aa).

2 residues coordinate Mn(2+): K264 and D269. Residue K276 is part of the active site. Residues D287, D346, and E348 each coordinate Mn(2+). The active site involves R350.

The protein belongs to the peptidase M17 family. Requires Mn(2+) as cofactor.

It is found in the cytoplasm. The enzyme catalyses Release of an N-terminal amino acid, Xaa-|-Yaa-, in which Xaa is preferably Leu, but may be other amino acids including Pro although not Arg or Lys, and Yaa may be Pro. Amino acid amides and methyl esters are also readily hydrolyzed, but rates on arylamides are exceedingly low.. It carries out the reaction Release of an N-terminal amino acid, preferentially leucine, but not glutamic or aspartic acids.. Its function is as follows. Presumably involved in the processing and regular turnover of intracellular proteins. Catalyzes the removal of unsubstituted N-terminal amino acids from various peptides. The chain is Probable cytosol aminopeptidase from Nitrobacter winogradskyi (strain ATCC 25391 / DSM 10237 / CIP 104748 / NCIMB 11846 / Nb-255).